The primary structure comprises 95 residues: uncharacterized protein (95 aa).

The region spanning 2-92 (VREAAMLHIK…YTPFPTVEHF (91 aa)) is the ABM domain.

This is an uncharacterized protein from Bacillus subtilis (strain 168).